The following is a 69-amino-acid chain: Ferredoxin-1 (69 aa).

The [3Fe-4S] cluster site is built by Cys-12, Cys-18, and Cys-57.

[3Fe-4S] cluster serves as cofactor.

Its function is as follows. Electron transport protein for the cytochrome P-450-SU1 system. In Streptomyces griseolus, this protein is Ferredoxin-1 (suaB).